Consider the following 324-residue polypeptide: Glutamyl-Q tRNA(Asp) synthetase (324 aa).

L-glutamate-binding positions include 5–9 (RLAPS) and E41. Positions 8–18 (PSPTGNIHLGN) match the 'HIGH' region motif. Residues C105, C107, Y128, and C132 each coordinate Zn(2+). Residues Y193 and R211 each contribute to the L-glutamate site. The 'KMSKS' region signature appears at 249 to 253 (RLAKR). K252 is a binding site for ATP.

The protein belongs to the class-I aminoacyl-tRNA synthetase family. GluQ subfamily. Zn(2+) is required as a cofactor.

Functionally, catalyzes the tRNA-independent activation of glutamate in presence of ATP and the subsequent transfer of glutamate onto a tRNA(Asp). Glutamate is transferred on the 2-amino-5-(4,5-dihydroxy-2-cyclopenten-1-yl) moiety of the queuosine in the wobble position of the QUC anticodon. This Nitratidesulfovibrio vulgaris (strain ATCC 29579 / DSM 644 / CCUG 34227 / NCIMB 8303 / VKM B-1760 / Hildenborough) (Desulfovibrio vulgaris) protein is Glutamyl-Q tRNA(Asp) synthetase.